A 346-amino-acid polypeptide reads, in one-letter code: uncharacterized protein (346 aa).

Transmembrane regions (helical) follow at residues 15–35 (YLRG…LLTV), 55–75 (VEAR…YLFI), 93–113 (ILVL…EALT), 139–159 (ILLL…PLIL), 182–202 (IFTF…YCYV), 229–249 (LGVA…LLLL), 269–289 (LTNY…FHLF), and 295–315 (LQSL…SAMW).

The protein to E.coli YeiB, B.subtilis YxaH and B.subtilis YrkO.

It localises to the cell membrane. Its function is as follows. Involved in transport. This is an uncharacterized protein from Bacillus acidopullulyticus.